Here is a 473-residue protein sequence, read N- to C-terminus: Ribulose bisphosphate carboxylase large chain (473 aa).

2 residues coordinate substrate: N116 and T166. K168 (proton acceptor) is an active-site residue. K170 serves as a coordination point for substrate. Positions 194, 196, and 197 each coordinate Mg(2+). N6-carboxylysine is present on K194. H287 acts as the Proton acceptor in catalysis. The substrate site is built by R288, H320, and S372.

The protein belongs to the RuBisCO large chain family. Type I subfamily. Heterohexadecamer of 8 large chains and 8 small chains. Requires Mg(2+) as cofactor.

The enzyme catalyses 2 (2R)-3-phosphoglycerate + 2 H(+) = D-ribulose 1,5-bisphosphate + CO2 + H2O. It carries out the reaction D-ribulose 1,5-bisphosphate + O2 = 2-phosphoglycolate + (2R)-3-phosphoglycerate + 2 H(+). In terms of biological role, ruBisCO catalyzes two reactions: the carboxylation of D-ribulose 1,5-bisphosphate, the primary event in carbon dioxide fixation, as well as the oxidative fragmentation of the pentose substrate. Both reactions occur simultaneously and in competition at the same active site. The chain is Ribulose bisphosphate carboxylase large chain from Cupriavidus metallidurans (strain ATCC 43123 / DSM 2839 / NBRC 102507 / CH34) (Ralstonia metallidurans).